A 508-amino-acid polypeptide reads, in one-letter code: Aldehyde dehydrogenase family 7 member A1 (508 aa).

244-249 (GSSKVG) contributes to the NAD(+) binding site. Glu266 (proton acceptor) is an active-site residue. Residue Cys300 is the Nucleophile of the active site.

It belongs to the aldehyde dehydrogenase family. As to quaternary structure, homotetramer.

It carries out the reaction an aldehyde + NAD(+) + H2O = a carboxylate + NADH + 2 H(+). May play a role in fruit development. This is Aldehyde dehydrogenase family 7 member A1 from Malus domestica (Apple).